Here is a 109-residue protein sequence, read N- to C-terminus: Nucleoid-associated protein Cvib_1034 (109 aa).

Belongs to the YbaB/EbfC family. Homodimer.

The protein localises to the cytoplasm. It localises to the nucleoid. In terms of biological role, binds to DNA and alters its conformation. May be involved in regulation of gene expression, nucleoid organization and DNA protection. In Chlorobium phaeovibrioides (strain DSM 265 / 1930) (Prosthecochloris vibrioformis (strain DSM 265)), this protein is Nucleoid-associated protein Cvib_1034.